Reading from the N-terminus, the 1213-residue chain is DNA-directed RNA polymerase subunit beta' (1213 aa).

Residues Cys-60, Cys-62, Cys-75, and Cys-78 each coordinate Zn(2+). Mg(2+)-binding residues include Asp-450, Asp-452, and Asp-454. 4 residues coordinate Zn(2+): Cys-819, Cys-893, Cys-900, and Cys-903.

This sequence belongs to the RNA polymerase beta' chain family. In terms of assembly, the RNAP catalytic core consists of 2 alpha, 1 beta, 1 beta' and 1 omega subunit. When a sigma factor is associated with the core the holoenzyme is formed, which can initiate transcription. Mg(2+) is required as a cofactor. Zn(2+) serves as cofactor.

It carries out the reaction RNA(n) + a ribonucleoside 5'-triphosphate = RNA(n+1) + diphosphate. Its function is as follows. DNA-dependent RNA polymerase catalyzes the transcription of DNA into RNA using the four ribonucleoside triphosphates as substrates. This Streptococcus pyogenes serotype M28 (strain MGAS6180) protein is DNA-directed RNA polymerase subunit beta'.